Consider the following 552-residue polypeptide: Hyaluronan synthase 2 (552 aa).

Residues 1-11 (MHCERFLCILR) are Cytoplasmic-facing. The chain crosses the membrane as a helical span at residues 12–32 (IIGTTLFGVSLLLGITAAYIV). Residues 33 to 45 (GYQFIQTDNYYFS) are Extracellular-facing. The chain crosses the membrane as a helical span at residues 46-66 (FGLYGAFLASHLIIQSLFAFL). The Cytoplasmic portion of the chain corresponds to 67 to 374 (EHRKMKKSLE…NAMWFHKHHL (308 aa)). At T110 the chain carries Phosphothreonine. A Glycyl lysine isopeptide (Lys-Gly) (interchain with G-Cter in ubiquitin) cross-link involves residue K190. The O-linked (GlcNAc) serine glycan is linked to S221. T328 carries the phosphothreonine modification. The helical transmembrane segment at 375 to 395 (WMTYEAVITGFFPFFLIATVI) threads the bilayer. Topologically, residues 396-402 (QLFYRGK) are extracellular. Residues 403 to 423 (IWNILLFLLTVQLVGLIKSSF) form a helical membrane-spanning segment. At 424–429 (ASCLRG) the chain is on the cytoplasmic side. Residues 430–450 (NIVMVFMSLYSVLYMSSLLPA) traverse the membrane as a helical segment. Over 451 to 475 (KMFAIATINKAGWGTSGRKTIVVNF) the chain is Extracellular. The chain crosses the membrane as a helical span at residues 476–496 (IGLIPVSVWFTILLGGVIFTI). At 497–510 (YKESKKPFSESKQT) the chain is on the cytoplasmic side. The chain crosses the membrane as a helical span at residues 511-531 (VLIVGTLLYACYWVMLLTLYV). At 532–552 (VLINKCGRRKKGQQYDMVLDV) the chain is on the extracellular side.

Belongs to the NodC/HAS family. As to quaternary structure, homodimer; dimerization promotes enzymatic activity. Forms heterodimer with HAS3. Forms heterodimer with HAS1. Mg(2+) is required as a cofactor. Post-translationally, phosphorylation at Thr-328 is essential for hyaluronan synthase activity. In terms of processing, O-GlcNAcylation at Ser-221 increases the stability of HAS2 and plasma membrane localization. Ubiquitination at Lys-190; this ubiquitination is essential for hyaluronan synthase activity and homo- or hetero-oligomerization. Can also be poly-ubiquitinated. Deubiquitinated by USP17L22/USP17 and USP4. USP17L22/USP17 efficiently removes 'Lys-63'- and 'Lys-48'-linked polyubiquitin chains, whereas USP4 preferentially removes monoubiquitination and, partially, both 'Lys-63'- and 'Lys-48'-linked polyubiquitin chain. Overexpressed in skin fibroblasts.

The protein resides in the cell membrane. It localises to the endoplasmic reticulum membrane. Its subcellular location is the vesicle. The protein localises to the golgi apparatus membrane. It is found in the lysosome. The catalysed reaction is [hyaluronan](n) + UDP-N-acetyl-alpha-D-glucosamine = N-acetyl-beta-D-glucosaminyl-(1-&gt;4)-[hyaluronan](n) + UDP + H(+). The enzyme catalyses N-acetyl-beta-D-glucosaminyl-(1-&gt;4)-[hyaluronan](n) + UDP-alpha-D-glucuronate = [hyaluronan](n+1) + UDP + H(+). It participates in glycan biosynthesis; hyaluronan biosynthesis. Catalyzes the addition of GlcNAc or GlcUA monosaccharides to the nascent hyaluronan polymer. Therefore, it is essential to hyaluronan synthesis a major component of most extracellular matrices that has a structural role in tissues architectures and regulates cell adhesion, migration and differentiation. This is one of three isoenzymes responsible for cellular hyaluronan synthesis and it is particularly responsible for the synthesis of high molecular mass hyaluronan. This chain is Hyaluronan synthase 2 (Has2), found in Heterocephalus glaber (Naked mole rat).